The following is a 295-amino-acid chain: Glycine--tRNA ligase alpha subunit (295 aa).

It belongs to the class-II aminoacyl-tRNA synthetase family. As to quaternary structure, tetramer of two alpha and two beta subunits.

It is found in the cytoplasm. The catalysed reaction is tRNA(Gly) + glycine + ATP = glycyl-tRNA(Gly) + AMP + diphosphate. This Rhodospirillum rubrum (strain ATCC 11170 / ATH 1.1.1 / DSM 467 / LMG 4362 / NCIMB 8255 / S1) protein is Glycine--tRNA ligase alpha subunit.